Here is a 61-residue protein sequence, read N- to C-terminus: Large ribosomal subunit protein bL32 (61 aa).

It belongs to the bacterial ribosomal protein bL32 family.

The polypeptide is Large ribosomal subunit protein bL32 (Ehrlichia canis (strain Jake)).